The following is an 88-amino-acid chain: NADH-ubiquinone oxidoreductase chain 4L (88 aa).

3 helical membrane passes run 1 to 21 (MNLS…NRKN), 22 to 42 (IILM…LVLM), and 55 to 75 (FSIY…SILV).

Belongs to the complex I subunit 4L family.

It is found in the mitochondrion membrane. It catalyses the reaction a ubiquinone + NADH + 5 H(+)(in) = a ubiquinol + NAD(+) + 4 H(+)(out). Its function is as follows. Core subunit of the mitochondrial membrane respiratory chain NADH dehydrogenase (Complex I) that is believed to belong to the minimal assembly required for catalysis. Complex I functions in the transfer of electrons from NADH to the respiratory chain. The immediate electron acceptor for the enzyme is believed to be ubiquinone. In Schizophyllum commune (Split gill fungus), this protein is NADH-ubiquinone oxidoreductase chain 4L (ND4L).